A 750-amino-acid chain; its full sequence is GRIP and coiled-coil domain-containing protein C27D7.02c (750 aa).

2 disordered regions span residues 14 to 53 (AQGQ…AKNM) and 188 to 280 (KTVE…RDIA). 2 stretches are compositionally biased toward basic and acidic residues: residues 18–34 (EEAK…DQLR) and 188–198 (KTVETKNDVPE). Residues 28–182 (QEEDQLRRNN…AQSIEQEVIS (155 aa)) adopt a coiled-coil conformation. The segment covering 201 to 213 (RPSTDTIGVSSAL) has biased composition (polar residues). Residues 213–243 (LSKKKKKRNRKNQKKKSTKQNIEATTENDAL) are a coiled coil. A compositionally biased stretch (basic residues) spans 214–230 (SKKKKKRNRKNQKKKST). A compositionally biased stretch (polar residues) spans 233 to 251 (NIEATTENDALSESISTPD). A compositionally biased stretch (basic and acidic residues) spans 269 to 280 (ADSKEEERRDIA). Positions 344 to 665 (KLVEELTKQL…YEHLQKSFKN (322 aa)) form a coiled coil. The segment at 672–703 (KQQPSNHGRNSSVSRSSSSVEVNSKHPGSDDM) is disordered. Over residues 676–693 (SNHGRNSSVSRSSSSVEV) the composition is skewed to low complexity. Positions 694–703 (NSKHPGSDDM) are enriched in basic and acidic residues. A GRIP domain is found at 700–748 (SDDMLIDKEYTRNILFQFLEQRDRRPEIVNLLSILLDLSEEQKQKLLSV).

It is found in the cytoplasm. This chain is GRIP and coiled-coil domain-containing protein C27D7.02c, found in Schizosaccharomyces pombe (strain 972 / ATCC 24843) (Fission yeast).